We begin with the raw amino-acid sequence, 81 residues long: Cytochrome b559 subunit alpha (81 aa).

The helical transmembrane segment at valine 21 to tryptophan 35 threads the bilayer. Histidine 23 provides a ligand contact to heme.

Belongs to the PsbE/PsbF family. As to quaternary structure, heterodimer of an alpha subunit and a beta subunit. PSII is composed of 1 copy each of membrane proteins PsbA, PsbB, PsbC, PsbD, PsbE, PsbF, PsbH, PsbI, PsbJ, PsbK, PsbL, PsbM, PsbT, PsbY, PsbZ, Psb30/Ycf12, at least 3 peripheral proteins of the oxygen-evolving complex and a large number of cofactors. It forms dimeric complexes. It depends on heme b as a cofactor.

Its subcellular location is the plastid. The protein resides in the chloroplast thylakoid membrane. In terms of biological role, this b-type cytochrome is tightly associated with the reaction center of photosystem II (PSII). PSII is a light-driven water:plastoquinone oxidoreductase that uses light energy to abstract electrons from H(2)O, generating O(2) and a proton gradient subsequently used for ATP formation. It consists of a core antenna complex that captures photons, and an electron transfer chain that converts photonic excitation into a charge separation. The chain is Cytochrome b559 subunit alpha from Euglena gracilis.